The chain runs to 474 residues: Glutamate--tRNA ligase 1 (474 aa).

The short motif at 11–21 is the 'HIGH' region element; sequence PSPTGYLHIGG. Residues 240–244 carry the 'KMSKS' region motif; that stretch reads KLSKR. Residue K243 coordinates ATP.

Belongs to the class-I aminoacyl-tRNA synthetase family. Glutamate--tRNA ligase type 1 subfamily. Monomer.

It is found in the cytoplasm. The catalysed reaction is tRNA(Glu) + L-glutamate + ATP = L-glutamyl-tRNA(Glu) + AMP + diphosphate. In terms of biological role, catalyzes the attachment of glutamate to tRNA(Glu) in a two-step reaction: glutamate is first activated by ATP to form Glu-AMP and then transferred to the acceptor end of tRNA(Glu). In Mesorhizobium japonicum (strain LMG 29417 / CECT 9101 / MAFF 303099) (Mesorhizobium loti (strain MAFF 303099)), this protein is Glutamate--tRNA ligase 1.